A 109-amino-acid polypeptide reads, in one-letter code: uncharacterized protein (109 aa).

Residues 1–22 (MKPYSTLFLFTLLTLTTVPAQA) form the signal peptide. Residues 39-109 (AYNPDHGRDY…ERRMEDEYGQ (71 aa)) form a disordered region. A compositionally biased stretch (basic and acidic residues) spans 41–109 (NPDHGRDYED…ERRMEDEYGQ (69 aa)).

This is an uncharacterized protein from Shigella dysenteriae serotype 1 (strain Sd197).